Here is a 186-residue protein sequence, read N- to C-terminus: Ribosome-recycling factor (186 aa).

It belongs to the RRF family.

It localises to the cytoplasm. Functionally, responsible for the release of ribosomes from messenger RNA at the termination of protein biosynthesis. May increase the efficiency of translation by recycling ribosomes from one round of translation to another. This chain is Ribosome-recycling factor, found in Burkholderia cenocepacia (strain HI2424).